Consider the following 820-residue polypeptide: Crinkler effector protein 108 (820 aa).

Residues 1–17 form the signal peptide; it reads MVKLYCAVVGVAGSAFS. An LQLFLAK domain region spans residues 18–55; sequence VRVDESDTVDDLKDAIKAKKPNDFKDIDADKLELYVAK. Residues 58–111 form a DWL domain region; the sequence is GVWLTEADVKSGVADITGLVRLEVVRAKLFSVGLSDEVVSEVDAQEEAAGRGPV. Residues 112–117 carry the HVLVXXP motif motif; it reads NVLVVV. The Host nuclear localization signal motif lies at 118 to 124; it reads PMKKRRV. Positions 125–820 are C-terminal DC effector domain; sequence DAGVDEERRF…MHYDDDEADL (696 aa). 3 N-linked (GlcNAc...) asparagine glycosylation sites follow: Asn268, Asn371, and Asn703. The hhH DNA-binding domain stretch occupies residues 754 to 791; that stretch reads NINTASFHELRRLEGVGDATAAKIIAERTIRRFSNLED.

This sequence belongs to the Crinkler effector family.

It is found in the secreted. It localises to the host nucleus. In terms of biological role, secreted effector that suppresses plant basal defense and promotes plant susceptibility via targeting promoters of host HSP gene and thus inhibiting their expression. CRN108 binds directly to heat shock elements (HSEs) 5'-GAAnnTTC-3' and interferes with the association of the HSE with the plant heat shock transcription factors, which initializes HSP gene expression in response to stress. This chain is Crinkler effector protein 108, found in Phytophthora sojae (Soybean stem and root rot agent).